Here is a 208-residue protein sequence, read N- to C-terminus: Protein JLP2 (208 aa).

Basic residues predominate over residues 185-194 (AKKNQKKKNK). The segment at 185–208 (AKKNQKKKNKQSKDEVTDDMQLEV) is disordered.

Belongs to the CCDC25 family.

The protein localises to the cytoplasm. The polypeptide is Protein JLP2 (JLP2) (Saccharomyces cerevisiae (strain ATCC 204508 / S288c) (Baker's yeast)).